Reading from the N-terminus, the 1076-residue chain is Carbamoyl phosphate synthase large chain (1076 aa).

The carboxyphosphate synthetic domain stretch occupies residues 1-402; that stretch reads MPKREDIRKI…ALQKAIRSLE (402 aa). Positions 129, 169, 175, 176, 208, 210, 215, 241, 242, 243, 285, and 299 each coordinate ATP. An ATP-grasp 1 domain is found at 133 to 328; it reads KEAMRKIGLD…IAKIAAKLAV (196 aa). Mg(2+)-binding residues include Gln-285, Glu-299, and Asn-301. Positions 285, 299, and 301 each coordinate Mn(2+). Residues 403 to 555 are oligomerization domain; the sequence is IGRYGLGCDG…YSTYEDENEA (153 aa). The tract at residues 556 to 939 is carbamoyl phosphate synthetic domain; that stretch reads LRSERKKVMI…YKAELAAGMK (384 aa). Residues 680–871 enclose the ATP-grasp 2 domain; sequence AELLERLNIP…LAKIAAKLMM (192 aa). ATP contacts are provided by Arg-716, Lys-755, Leu-757, Glu-762, Gly-787, Val-788, His-789, Ser-790, Gln-830, and Glu-842. Mg(2+) contacts are provided by Gln-830, Glu-842, and Asn-844. Gln-830, Glu-842, and Asn-844 together coordinate Mn(2+). In terms of domain architecture, MGS-like spans 938–1076; the sequence is MKLPLKGTVF…KSIQEYHEES (139 aa). The tract at residues 940–1076 is allosteric domain; that stretch reads LPLKGTVFIS…KSIQEYHEES (137 aa).

The protein belongs to the CarB family. In terms of assembly, composed of two chains; the small (or glutamine) chain promotes the hydrolysis of glutamine to ammonia, which is used by the large (or ammonia) chain to synthesize carbamoyl phosphate. Tetramer of heterodimers (alpha,beta)4. The cofactor is Mg(2+). It depends on Mn(2+) as a cofactor.

It carries out the reaction hydrogencarbonate + L-glutamine + 2 ATP + H2O = carbamoyl phosphate + L-glutamate + 2 ADP + phosphate + 2 H(+). The enzyme catalyses hydrogencarbonate + NH4(+) + 2 ATP = carbamoyl phosphate + 2 ADP + phosphate + 2 H(+). It participates in amino-acid biosynthesis; L-arginine biosynthesis; carbamoyl phosphate from bicarbonate: step 1/1. It functions in the pathway pyrimidine metabolism; UMP biosynthesis via de novo pathway; (S)-dihydroorotate from bicarbonate: step 1/3. Large subunit of the glutamine-dependent carbamoyl phosphate synthetase (CPSase). CPSase catalyzes the formation of carbamoyl phosphate from the ammonia moiety of glutamine, carbonate, and phosphate donated by ATP, constituting the first step of 2 biosynthetic pathways, one leading to arginine and/or urea and the other to pyrimidine nucleotides. The large subunit (synthetase) binds the substrates ammonia (free or transferred from glutamine from the small subunit), hydrogencarbonate and ATP and carries out an ATP-coupled ligase reaction, activating hydrogencarbonate by forming carboxy phosphate which reacts with ammonia to form carbamoyl phosphate. This Archaeoglobus fulgidus (strain ATCC 49558 / DSM 4304 / JCM 9628 / NBRC 100126 / VC-16) protein is Carbamoyl phosphate synthase large chain.